The chain runs to 442 residues: Glutamyl-tRNA reductase (442 aa).

Residues 50-53 (TCNR), serine 109, 114-116 (EPQ), and glutamine 120 contribute to the substrate site. Catalysis depends on cysteine 51, which acts as the Nucleophile. 189 to 194 (GAGEMA) serves as a coordination point for NADP(+).

The protein belongs to the glutamyl-tRNA reductase family. As to quaternary structure, homodimer.

It carries out the reaction (S)-4-amino-5-oxopentanoate + tRNA(Glu) + NADP(+) = L-glutamyl-tRNA(Glu) + NADPH + H(+). The protein operates within porphyrin-containing compound metabolism; protoporphyrin-IX biosynthesis; 5-aminolevulinate from L-glutamyl-tRNA(Glu): step 1/2. Catalyzes the NADPH-dependent reduction of glutamyl-tRNA(Glu) to glutamate 1-semialdehyde (GSA). The protein is Glutamyl-tRNA reductase of Nitratidesulfovibrio vulgaris (strain DSM 19637 / Miyazaki F) (Desulfovibrio vulgaris).